Consider the following 224-residue polypeptide: PKHD-type hydroxylase Shewmr7_0698 (224 aa).

Residues 78-176 (QFYPPLFNRY…RTAAFMWLQS (99 aa)) enclose the Fe2OG dioxygenase domain. Residues His-96, Asp-98, and His-157 each coordinate Fe cation. 2-oxoglutarate is bound at residue Arg-167.

Fe(2+) serves as cofactor. The cofactor is L-ascorbate.

The polypeptide is PKHD-type hydroxylase Shewmr7_0698 (Shewanella sp. (strain MR-7)).